We begin with the raw amino-acid sequence, 114 residues long: Protachykinin (114 aa).

The signal sequence occupies residues 1 to 19 (MKFLLPSIVIFLVLCQVFG). Residues 20 to 55 (EELGPKEDLDYWTGSNQVQDEWLQADPFREIIRRMT) constitute a propeptide that is removed on maturation. Met-67 and Met-91 each carry methionine amide.

This sequence belongs to the tachykinin family. Expressed in all parts of the brain, with robust expression in the olfactory bulbs and tracts, moderate expression in the hypothalamus and posterior brain, and weak expression in the telencephalon-preoptic region and optic tectum-thalamus. Also expressed in nerve fibers, intestine, testes and pituitary gland. Not expressed in the liver or kidneys.

It localises to the secreted. In terms of biological role, tachykinins are active peptides which excite neurons, evoke behavioral responses, are potent vasodilators and secretagogues, and contract (directly or indirectly) many smooth muscles. Its function is as follows. Substance P produces a voltage-dependent inhibition of calcium current in retinal bipolar cells. It can enhance learning and memory, may regulate social approach and feeding behaviors, and can accelerate the functional recovery in postural balance in response to light after unilateral labyrinthectomy. This is Protachykinin from Carassius auratus (Goldfish).